The sequence spans 430 residues: Glutamine synthetase, chloroplastic/mitochondrial (430 aa).

The N-terminal 45 residues, 1-45, are a transit peptide targeting the chloroplast and mitochondrion; it reads MAQILAASPTCQMRVPKHSSVIASSSKLWSSVVLKQKKQSNNKVR. The 81-residue stretch at 77–157 folds into the GS beta-grasp domain; that stretch reads IIAEYIWIGG…VICDTWTPAG (81 aa). The disordered stretch occupies residues 97-122; it reads TIEKPVEDPSELPKWNYDGSSTGQAP. Position 106 is a phosphoserine (S106). The region spanning 161-430 is the GS catalytic domain; sequence PTNKRAKAAE…LAAQKLSLNV (270 aa).

The protein belongs to the glutamine synthetase family. In terms of assembly, homooctamer. In terms of tissue distribution, expressed in mesophyll and epidermal cells of leaves.

The protein localises to the plastid. It is found in the chloroplast. The protein resides in the mitochondrion. It catalyses the reaction L-glutamate + NH4(+) + ATP = L-glutamine + ADP + phosphate + H(+). Its function is as follows. The light-modulated chloroplast/mitochondrial enzyme, encoded by a nuclear gene and expressed primarily in leaves, is responsible for the reassimilation of the ammonia generated by photorespiration. This is Glutamine synthetase, chloroplastic/mitochondrial (GLN2) from Arabidopsis thaliana (Mouse-ear cress).